A 615-amino-acid polypeptide reads, in one-letter code: Isocitrate dehydrogenase kinase/phosphatase (615 aa).

ATP is bound by residues 325–331 (APGIKGM) and Lys-346. The active site involves Asp-381.

It belongs to the AceK family.

The protein localises to the cytoplasm. The enzyme catalyses L-seryl-[isocitrate dehydrogenase] + ATP = O-phospho-L-seryl-[isocitrate dehydrogenase] + ADP + H(+). In terms of biological role, bifunctional enzyme which can phosphorylate or dephosphorylate isocitrate dehydrogenase (IDH) on a specific serine residue. This is a regulatory mechanism which enables bacteria to bypass the Krebs cycle via the glyoxylate shunt in response to the source of carbon. When bacteria are grown on glucose, IDH is fully active and unphosphorylated, but when grown on acetate or ethanol, the activity of IDH declines drastically concomitant with its phosphorylation. The polypeptide is Isocitrate dehydrogenase kinase/phosphatase (Albidiferax ferrireducens (strain ATCC BAA-621 / DSM 15236 / T118) (Rhodoferax ferrireducens)).